Here is a 59-residue protein sequence, read N- to C-terminus: Single-pass membrane and coiled-coil domain-containing protein 4 (59 aa).

The disordered stretch occupies residues 1-23; it reads MRQLKGKPKKETSKDKKERKQAM. Positions 9–22 are enriched in basic and acidic residues; that stretch reads KKETSKDKKERKQA. Positions 9–31 form a coiled coil; sequence KKETSKDKKERKQAMQEARQQIT. Residues 32–52 form a helical membrane-spanning segment; that stretch reads TVVLPTLAVVVLLIVVFVYVA.

This sequence belongs to the SMCO4 family.

The protein localises to the membrane. This Mus musculus (Mouse) protein is Single-pass membrane and coiled-coil domain-containing protein 4 (Smco4).